Reading from the N-terminus, the 171-residue chain is uncharacterized protein (171 aa).

The tract at residues 56-83 (TVGVNKNAKNGPTQSQTRSGSAGAQARM) is disordered. A compositionally biased stretch (polar residues) spans 57–77 (VGVNKNAKNGPTQSQTRSGSA). Positions 113–170 (KAFETLGLGASATTADIKAAYKDLVKKHHPDANGGDRGSEERFRAVIQAYQLLKQAGF) constitute a J domain.

This is an uncharacterized protein from Sinorhizobium sp.